The chain runs to 400 residues: Chaperone protein DnaJ (400 aa).

In terms of domain architecture, J spans 4 to 69 (DYYETLGVTR…DKRRRYDQFG (66 aa)). The CR-type zinc finger occupies 156-237 (GVEKTLKVKR…CYGEGIKLGE (82 aa)). Residues C169, C172, C185, C188, C211, C214, C225, and C228 each contribute to the Zn(2+) site. CXXCXGXG motif repeat units follow at residues 169–176 (CEVCNGTG), 185–192 (CQTCHGSG), 211–218 (CPTCGGEG), and 225–232 (CTACYGEG).

The protein belongs to the DnaJ family. Homodimer. Zn(2+) is required as a cofactor.

The protein localises to the cytoplasm. Its function is as follows. Participates actively in the response to hyperosmotic and heat shock by preventing the aggregation of stress-denatured proteins and by disaggregating proteins, also in an autonomous, DnaK-independent fashion. Unfolded proteins bind initially to DnaJ; upon interaction with the DnaJ-bound protein, DnaK hydrolyzes its bound ATP, resulting in the formation of a stable complex. GrpE releases ADP from DnaK; ATP binding to DnaK triggers the release of the substrate protein, thus completing the reaction cycle. Several rounds of ATP-dependent interactions between DnaJ, DnaK and GrpE are required for fully efficient folding. Also involved, together with DnaK and GrpE, in the DNA replication of plasmids through activation of initiation proteins. The protein is Chaperone protein DnaJ of Chlorobium chlorochromatii (strain CaD3).